Here is a 174-residue protein sequence, read N- to C-terminus: Ribulose bisphosphate carboxylase small subunit, chloroplastic 1 (174 aa).

The N-terminal 45 residues, 1 to 45 (MAPAVMASSATTVAPFQGLKSTAGLPVSRRSRGSLGSVSNGGRIR), are a transit peptide targeting the chloroplast.

Belongs to the RuBisCO small chain family. As to quaternary structure, heterohexadecamer of 8 large and 8 small subunits.

Its subcellular location is the plastid. The protein localises to the chloroplast. Functionally, ruBisCO catalyzes two reactions: the carboxylation of D-ribulose 1,5-bisphosphate, the primary event in carbon dioxide fixation, as well as the oxidative fragmentation of the pentose substrate. Both reactions occur simultaneously and in competition at the same active site. Although the small subunit is not catalytic it is essential for maximal activity. This Triticum aestivum (Wheat) protein is Ribulose bisphosphate carboxylase small subunit, chloroplastic 1.